Consider the following 621-residue polypeptide: Protein CASP (621 aa).

The Cytoplasmic segment spans residues 1–574 (MEIVSRAWES…ILATPKSRTV (574 aa)). Coiled-coil stretches lie at residues 101–445 (LLKG…VQDI) and 473–525 (ILTS…FLQS). A helical; Anchor for type IV membrane protein membrane pass occupies residues 575-595 (FFSYLLILHALIMLVLYKFAF). Over 596–621 (DQSVVRDAETECEYKFHQHMLDNHKQ) the chain is Lumenal.

The protein belongs to the CASP family.

The protein resides in the golgi apparatus membrane. Its function is as follows. May be involved in intra-Golgi retrograde transport. This is Protein CASP (ceh-44) from Caenorhabditis elegans.